Reading from the N-terminus, the 454-residue chain is CCA-adding enzyme (454 aa).

ATP is bound by residues Ser-51 and Lys-54. Residues Ser-51 and Lys-54 each coordinate CTP. Residues Asp-63, Asp-65, and Asp-118 each contribute to the Mg(2+) site. The ATP site is built by His-141, Lys-161, and Tyr-170. CTP-binding residues include His-141, Lys-161, and Tyr-170.

This sequence belongs to the tRNA nucleotidyltransferase/poly(A) polymerase family. Archaeal CCA-adding enzyme subfamily. Homodimer. It depends on Mg(2+) as a cofactor.

The catalysed reaction is a tRNA precursor + 2 CTP + ATP = a tRNA with a 3' CCA end + 3 diphosphate. It catalyses the reaction a tRNA with a 3' CCA end + 2 CTP + ATP = a tRNA with a 3' CCACCA end + 3 diphosphate. Functionally, catalyzes the addition and repair of the essential 3'-terminal CCA sequence in tRNAs without using a nucleic acid template. Adds these three nucleotides in the order of C, C, and A to the tRNA nucleotide-73, using CTP and ATP as substrates and producing inorganic pyrophosphate. tRNA 3'-terminal CCA addition is required both for tRNA processing and repair. Also involved in tRNA surveillance by mediating tandem CCA addition to generate a CCACCA at the 3' terminus of unstable tRNAs. While stable tRNAs receive only 3'-terminal CCA, unstable tRNAs are marked with CCACCA and rapidly degraded. This Methanothermobacter thermautotrophicus (strain ATCC 29096 / DSM 1053 / JCM 10044 / NBRC 100330 / Delta H) (Methanobacterium thermoautotrophicum) protein is CCA-adding enzyme.